A 367-amino-acid polypeptide reads, in one-letter code: tRNA 2-selenouridine synthase (367 aa).

Positions 15–138 (FLQARPLIDV…LRTFLIQILE (124 aa)) constitute a Rhodanese domain. Cys98 functions as the S-selanylcysteine intermediate in the catalytic mechanism.

Belongs to the SelU family. Monomer.

It catalyses the reaction 5-methylaminomethyl-2-thiouridine(34) in tRNA + selenophosphate + (2E)-geranyl diphosphate + H2O + H(+) = 5-methylaminomethyl-2-selenouridine(34) in tRNA + (2E)-thiogeraniol + phosphate + diphosphate. The enzyme catalyses 5-methylaminomethyl-2-thiouridine(34) in tRNA + (2E)-geranyl diphosphate = 5-methylaminomethyl-S-(2E)-geranyl-thiouridine(34) in tRNA + diphosphate. It carries out the reaction 5-methylaminomethyl-S-(2E)-geranyl-thiouridine(34) in tRNA + selenophosphate + H(+) = 5-methylaminomethyl-2-(Se-phospho)selenouridine(34) in tRNA + (2E)-thiogeraniol. The catalysed reaction is 5-methylaminomethyl-2-(Se-phospho)selenouridine(34) in tRNA + H2O = 5-methylaminomethyl-2-selenouridine(34) in tRNA + phosphate. Involved in the post-transcriptional modification of the uridine at the wobble position (U34) of tRNA(Lys), tRNA(Glu) and tRNA(Gln). Catalyzes the conversion of 2-thiouridine (S2U-RNA) to 2-selenouridine (Se2U-RNA). Acts in a two-step process involving geranylation of 2-thiouridine (S2U) to S-geranyl-2-thiouridine (geS2U) and subsequent selenation of the latter derivative to 2-selenouridine (Se2U) in the tRNA chain. This Shewanella denitrificans (strain OS217 / ATCC BAA-1090 / DSM 15013) protein is tRNA 2-selenouridine synthase.